The following is a 152-amino-acid chain: Xanthine-guanine phosphoribosyltransferase (152 aa).

5-phospho-alpha-D-ribose 1-diphosphate is bound by residues Arg37 to Gly38, Arg69, and Asp88 to Thr96. A GMP-binding site is contributed by Arg69. Mg(2+) is bound at residue Asp89. Residues Asp92 and Ile135 each contribute to the guanine site. The xanthine site is built by Asp92 and Ile135. GMP-binding positions include Asp92–Thr96 and Trp134–Ile135.

It belongs to the purine/pyrimidine phosphoribosyltransferase family. XGPT subfamily. In terms of assembly, homotetramer. Mg(2+) serves as cofactor.

It is found in the cell inner membrane. It carries out the reaction GMP + diphosphate = guanine + 5-phospho-alpha-D-ribose 1-diphosphate. The enzyme catalyses XMP + diphosphate = xanthine + 5-phospho-alpha-D-ribose 1-diphosphate. It catalyses the reaction IMP + diphosphate = hypoxanthine + 5-phospho-alpha-D-ribose 1-diphosphate. Its pathway is purine metabolism; GMP biosynthesis via salvage pathway; GMP from guanine: step 1/1. It functions in the pathway purine metabolism; XMP biosynthesis via salvage pathway; XMP from xanthine: step 1/1. Its function is as follows. Purine salvage pathway enzyme that catalyzes the transfer of the ribosyl-5-phosphate group from 5-phospho-alpha-D-ribose 1-diphosphate (PRPP) to the N9 position of the 6-oxopurines guanine and xanthine to form the corresponding ribonucleotides GMP (guanosine 5'-monophosphate) and XMP (xanthosine 5'-monophosphate), with the release of PPi. To a lesser extent, also acts on hypoxanthine. The sequence is that of Xanthine-guanine phosphoribosyltransferase from Shigella boydii serotype 4 (strain Sb227).